The following is a 721-amino-acid chain: Angiomotin-like 2a (721 aa).

The segment at 35–84 (QQALRGGSSGGGAGSPRSSLESLTQEESLSPQLSARQEPQGQEHQGDFQH) is disordered. The span at 49 to 68 (SPRSSLESLTQEESLSPQLS) shows a compositional bias: low complexity. The residue at position 103 (tyrosine 103) is a Phosphotyrosine; by FGFR1. Positions 169-214 (DNIPMSSSHSYPQLSNNHSDTVVNEQSVHQPDQRGPPPEYPFMVRS) are disordered. Residues 172–198 (PMSSSHSYPQLSNNHSDTVVNEQSVHQ) are compositionally biased toward polar residues. Residues 275–531 (ANNFQMEQLI…TRWEQKYLEE (257 aa)) adopt a coiled-coil conformation. The span at 554–567 (INHSPRNSPNSSFN) shows a compositional bias: polar residues. Disordered stretches follow at residues 554-575 (INHS…SPNH) and 666-709 (DSST…TQIS). Positions 688 to 702 (SAPEPSTASSSESTS) are enriched in low complexity. The PDZ-binding motif lies at 718-721 (EILI).

The protein belongs to the angiomotin family. In terms of assembly, interacts with SRC. In terms of processing, phosphorylation at Tyr-103 is necessary for efficient binding to SRC and synergistically functioning with SRC to activate the downstream MAPK pathway. As to expression, expressed in endothelial cells.

The protein resides in the recycling endosome. It localises to the cytoplasm. Its subcellular location is the cell projection. The protein localises to the podosome. It is found in the cell junction. Its function is as follows. Required for proper architecture of actin filaments and for cell movements during embryogenesis. Plays a role in the radial actin fiber architecture in skin epithelial cells, thereby maintains cell geometry, size and cell interconnectivity within the skin. Plays an important role in coupling actin fibers to cell junctions in endothelial cells and is therefore required for correct endothelial cell morphology and maintenance of dorsal aorta lumen expansion during embryogenesis. May further play a role in the polarity, proliferation and migration of endothelial cells, and therefore participates in angiogenesis. Inhibits the Wnt/beta-catenin signaling pathway, probably by recruiting CTNNB1 to recycling endosomes and hence preventing its translocation to the nucleus. Regulates the translocation of phosphorylated SRC to peripheral cell-matrix adhesion sites. Selectively promotes FGF-induced MAPK activation through SRC. The polypeptide is Angiomotin-like 2a (amotl2a) (Danio rerio (Zebrafish)).